We begin with the raw amino-acid sequence, 177 residues long: ATP-dependent protease subunit HslV (177 aa).

Threonine 6 is a catalytic residue. 3 residues coordinate Na(+): serine 161, cysteine 164, and threonine 167.

Belongs to the peptidase T1B family. HslV subfamily. As to quaternary structure, a double ring-shaped homohexamer of HslV is capped on each side by a ring-shaped HslU homohexamer. The assembly of the HslU/HslV complex is dependent on binding of ATP.

Its subcellular location is the cytoplasm. The enzyme catalyses ATP-dependent cleavage of peptide bonds with broad specificity.. With respect to regulation, allosterically activated by HslU binding. Protease subunit of a proteasome-like degradation complex believed to be a general protein degrading machinery. The polypeptide is ATP-dependent protease subunit HslV (Thermodesulfovibrio yellowstonii (strain ATCC 51303 / DSM 11347 / YP87)).